The sequence spans 371 residues: Cytochrome b (371 aa).

A run of 4 helical transmembrane segments spans residues 25-45 (FGSMLLACSSMQVLTGFFLAV), 69-90 (WMMQNLHAIGASMFFICIYIHI), 105-125 (WLSGTTLLIMLMATAFFGYVL), and 170-190 (FFALHFILPFGIISLSSLHIM). The heme b site is built by histidine 75 and histidine 89. Heme b is bound by residues histidine 174 and histidine 188. Histidine 193 contacts a ubiquinone. The next 4 membrane-spanning stretches (helical) occupy residues 218 to 238 (YKDLLMLSLMVLMLLMTVSFL), 280 to 300 (LGGALALAMSIMILLTIPFTH), 312 to 332 (IMQLMFWTLVATFMVITWAAT), and 339 to 358 (FTMISQIASTINFLFLIMNP).

This sequence belongs to the cytochrome b family. As to quaternary structure, the cytochrome bc1 complex contains 3 respiratory subunits (MT-CYB, CYC1 and UQCRFS1), 2 core proteins (UQCRC1 and UQCRC2) and probably 6 low-molecular weight proteins. The cofactor is heme b.

It is found in the mitochondrion inner membrane. Its function is as follows. Component of the ubiquinol-cytochrome c reductase complex (complex III or cytochrome b-c1 complex) that is part of the mitochondrial respiratory chain. The b-c1 complex mediates electron transfer from ubiquinol to cytochrome c. Contributes to the generation of a proton gradient across the mitochondrial membrane that is then used for ATP synthesis. In Eryx miliaris (Desert sand boa), this protein is Cytochrome b (MT-CYB).